We begin with the raw amino-acid sequence, 217 residues long: Adenylate kinase (217 aa).

Gly-10–Thr-15 contributes to the ATP binding site. An NMP region spans residues Ser-30–Val-59. Residues Thr-31, Arg-36, Gly-57–Val-59, Gly-85–Arg-88, and Gln-92 contribute to the AMP site. The segment at Gly-122–Asp-159 is LID. ATP contacts are provided by residues Arg-123 and Thr-132–Tyr-133. Residues Arg-156 and Arg-167 each coordinate AMP. Residue Gly-203 participates in ATP binding.

This sequence belongs to the adenylate kinase family. In terms of assembly, monomer.

The protein localises to the cytoplasm. It catalyses the reaction AMP + ATP = 2 ADP. The protein operates within purine metabolism; AMP biosynthesis via salvage pathway; AMP from ADP: step 1/1. Functionally, catalyzes the reversible transfer of the terminal phosphate group between ATP and AMP. Plays an important role in cellular energy homeostasis and in adenine nucleotide metabolism. The polypeptide is Adenylate kinase (Thiobacillus denitrificans (strain ATCC 25259 / T1)).